The following is a 157-amino-acid chain: Probable succinate transporter subunit YjjB (157 aa).

4 consecutive transmembrane segments (helical) span residues 8–28, 55–75, 87–107, and 129–149; these read LALM…AMVF, AGFN…SIGI, VFTV…TAMI, and FLKA…PGLW.

It belongs to the ThrE exporter (TC 2.A.79) family. In terms of assembly, the transporter is composed of YjjB and YjjP.

It is found in the cell inner membrane. In terms of biological role, involved in succinate export with YjjP. Both proteins are required for export. This is Probable succinate transporter subunit YjjB from Salmonella agona (strain SL483).